We begin with the raw amino-acid sequence, 950 residues long: Oxysterol-binding protein-related protein 1 (950 aa).

An interaction with RAB7A region spans residues 1 to 237 (MNTEAEQQLL…NKVIYKALKR (237 aa)). ANK repeat units follow at residues 47-76 (LGWT…EVNV), 80-109 (MGDT…DTTI), and 175-204 (LGNT…DPNL). In terms of domain architecture, PH spans 235-334 (LKRYEGPLWK…WLEAIEEHSA (100 aa)). The stretch at 430-463 (NFKLEQEQEKNKILSEALETLATEHHELEQSLVK) forms a coiled coil. An FFAT motif is present at residues 469 to 485 (SILSEDEFYDALSDSES). Ser499 carries the phosphoserine modification. Residues 501-521 (EEEGEHLGSRKHRMSEEKDCG) show a composition bias toward basic and acidic residues. Disordered stretches follow at residues 501 to 527 (EEEG…DALS), 795 to 816 (KKNT…LDEM), and 881 to 913 (MENG…SEED). The stretch at 877-913 (DIRAMENGEIDQASEEKKRLEEKQRAARKNRSKSEED) forms a coiled coil. Basic and acidic residues predominate over residues 890 to 901 (SEEKKRLEEKQR).

This sequence belongs to the OSBP family. As to quaternary structure, interacts (via FFAT motif) with VAPA and VAPB. Interacts with the GTP-bound form of RAB7A. Interacts with OAS1B. Interacts (via FFAT motif) with MOSPD2 (via MSP domain).

Its subcellular location is the late endosome. In terms of biological role, binds phospholipids; exhibits strong binding to phosphatidic acid and weak binding to phosphatidylinositol 3-phosphate. Stabilizes GTP-bound RAB7A on late endosomes/lysosomes and alters functional properties of late endocytic compartments via its interaction with RAB7A. Binds 25-hydroxycholesterol and cholesterol. The polypeptide is Oxysterol-binding protein-related protein 1 (Homo sapiens (Human)).